The chain runs to 305 residues: Axin interactor, dorsalization-associated protein B (305 aa).

Positions 126-137 are enriched in acidic residues; sequence ENLEVEEEEEDG. Positions 126–146 are disordered; sequence ENLEVEEEEEDGGAGAGSPDL. Residues 153 to 220 are axin-binding; it reads GTLLPRLPSE…RKEDTYVHFN (68 aa). The 148-residue stretch at 156 to 303 folds into the C2 Aida-type domain; sequence LPRLPSEPGM…LYLHLLQTLL (148 aa).

This sequence belongs to the AIDA family.

Its function is as follows. Acts as a ventralizing factor during embryogenesis. Inhibits axin-mediated JNK activation by binding axin and disrupting axin homodimerization. This in turn antagonizes a Wnt/beta-catenin-independent dorsalization pathway activated by axin/JNK-signaling. The sequence is that of Axin interactor, dorsalization-associated protein B (aida-b) from Xenopus laevis (African clawed frog).